We begin with the raw amino-acid sequence, 405 residues long: Diaminopimelate decarboxylase (405 aa).

Lysine 46 carries the post-translational modification N6-(pyridoxal phosphate)lysine. Pyridoxal 5'-phosphate is bound by residues glycine 225 and 259-262 (EPGR). Residues arginine 262, arginine 298, and tyrosine 302 each contribute to the substrate site. Cysteine 329 functions as the Proton donor in the catalytic mechanism. 2 residues coordinate substrate: glutamate 330 and tyrosine 358. Position 358 (tyrosine 358) interacts with pyridoxal 5'-phosphate.

It belongs to the Orn/Lys/Arg decarboxylase class-II family. LysA subfamily. As to quaternary structure, homodimer. Pyridoxal 5'-phosphate serves as cofactor.

It carries out the reaction meso-2,6-diaminopimelate + H(+) = L-lysine + CO2. The protein operates within amino-acid biosynthesis; L-lysine biosynthesis via DAP pathway; L-lysine from DL-2,6-diaminopimelate: step 1/1. Functionally, specifically catalyzes the decarboxylation of meso-diaminopimelate (meso-DAP) to L-lysine. The chain is Diaminopimelate decarboxylase from Helicobacter pylori (Campylobacter pylori).